The sequence spans 277 residues: 2-dehydro-3-deoxyphosphooctonate aldolase (277 aa).

The protein belongs to the KdsA family.

The protein resides in the cytoplasm. It carries out the reaction D-arabinose 5-phosphate + phosphoenolpyruvate + H2O = 3-deoxy-alpha-D-manno-2-octulosonate-8-phosphate + phosphate. Its pathway is carbohydrate biosynthesis; 3-deoxy-D-manno-octulosonate biosynthesis; 3-deoxy-D-manno-octulosonate from D-ribulose 5-phosphate: step 2/3. The protein operates within bacterial outer membrane biogenesis; lipopolysaccharide biosynthesis. In Brucella anthropi (strain ATCC 49188 / DSM 6882 / CCUG 24695 / JCM 21032 / LMG 3331 / NBRC 15819 / NCTC 12168 / Alc 37) (Ochrobactrum anthropi), this protein is 2-dehydro-3-deoxyphosphooctonate aldolase.